Reading from the N-terminus, the 717-residue chain is Polyribonucleotide nucleotidyltransferase (717 aa).

Residues Asp-486 and Asp-492 each coordinate Mg(2+). One can recognise a KH domain in the interval 553 to 612; it reads PKIVQLQIDIDKISLVIGSTGKTVKAITDEFEVRVQIEQDGRITLFGTDSLKMQKAKAKI. Positions 622–715 constitute an S1 motif domain; sequence GEIYDGIVKK…KFGKIELELV (94 aa). The disordered stretch occupies residues 659 to 689; it reads RYGDMRHSRYGSGRHSRYGRDNRNTFGMNPP. Positions 666 to 675 are enriched in basic residues; sequence SRYGSGRHSR.

This sequence belongs to the polyribonucleotide nucleotidyltransferase family. Mg(2+) is required as a cofactor.

It localises to the cytoplasm. The enzyme catalyses RNA(n+1) + phosphate = RNA(n) + a ribonucleoside 5'-diphosphate. Involved in mRNA degradation. Catalyzes the phosphorolysis of single-stranded polyribonucleotides processively in the 3'- to 5'-direction. The sequence is that of Polyribonucleotide nucleotidyltransferase from Borrelia hermsii (strain HS1 / DAH).